The chain runs to 313 residues: NADH-ubiquinone oxidoreductase chain 1 (313 aa).

The next 8 membrane-spanning stretches (helical) occupy residues 7-27, 73-93, 104-124, 150-170, 175-195, 226-246, 250-270, and 293-313; these read LIGSLLLVICVMVGVAFLTLL, IFYYFSPIFSLFLSLLIWMSM, LGVLFFLCITSLGVYTVMVAG, LALILLSFIFLIGNYNFLNFF, YMWFIVFCFPLGLVWFASCLA, LIFLAEYSSILFMSMLFSVIF, DIYSILFFFKLTIISFFFIWV, and MSLNYLFFFIGVKIFILSMLF.

The protein belongs to the complex I subunit 1 family.

Its subcellular location is the mitochondrion inner membrane. The catalysed reaction is a ubiquinone + NADH + 5 H(+)(in) = a ubiquinol + NAD(+) + 4 H(+)(out). Functionally, core subunit of the mitochondrial membrane respiratory chain NADH dehydrogenase (Complex I) that is believed to belong to the minimal assembly required for catalysis. Complex I functions in the transfer of electrons from NADH to the respiratory chain. The immediate electron acceptor for the enzyme is believed to be ubiquinone. The polypeptide is NADH-ubiquinone oxidoreductase chain 1 (Aedes aegypti (Yellowfever mosquito)).